We begin with the raw amino-acid sequence, 309 residues long: N(5)-(carboxyethyl)ornithine synthase (309 aa).

Pyruvate is bound by residues Arg15, Lys71, and His92. Position 171 to 176 (171 to 176) interacts with NADP(+); it reads GSGNVA.

Belongs to the AlaDH/PNT family. CEOS subfamily. Homotetramer.

The catalysed reaction is N(5)-[1(S)-1-carboxyethyl]-L-ornithine + NADP(+) + H2O = L-ornithine + pyruvate + NADPH + H(+). In terms of biological role, catalyzes the NADPH-dependent reductive condensation between pyruvic acid and the side chain amino group of L-ornithine to form N(5)-(L-1-carboxyethyl)-L-ornithine. To a lesser extent, can also use L-lysine as substrate (yielding N(6)-(L-1-carboxyethyl)-L-lysine). The protein is N(5)-(carboxyethyl)ornithine synthase (ceo) of Lactococcus lactis subsp. lactis (strain IL1403) (Streptococcus lactis).